The chain runs to 20 residues: Outer membrane protein 40Va (20 aa).

The protein belongs to the Gram-negative porin family. As to quaternary structure, homotrimer.

It is found in the cell outer membrane. Forms pores that allow passive diffusion of small molecules across the outer membrane. This Vibrio alginolyticus protein is Outer membrane protein 40Va.